The primary structure comprises 167 residues: Small ribosomal subunit protein uS9 (167 aa).

The segment at methionine 1–serine 41 is disordered. Positions threonine 17 to serine 26 are enriched in polar residues.

This sequence belongs to the universal ribosomal protein uS9 family.

This chain is Small ribosomal subunit protein uS9, found in Renibacterium salmoninarum (strain ATCC 33209 / DSM 20767 / JCM 11484 / NBRC 15589 / NCIMB 2235).